A 172-amino-acid polypeptide reads, in one-letter code: Shikimate kinase (172 aa).

14–19 is an ATP binding site; sequence GAGKST. S18 provides a ligand contact to Mg(2+). Positions 36, 60, and 82 each coordinate substrate. R120 is an ATP binding site. R139 contributes to the substrate binding site. ATP is bound at residue Q156.

It belongs to the shikimate kinase family. In terms of assembly, monomer. It depends on Mg(2+) as a cofactor.

It localises to the cytoplasm. It catalyses the reaction shikimate + ATP = 3-phosphoshikimate + ADP + H(+). The protein operates within metabolic intermediate biosynthesis; chorismate biosynthesis; chorismate from D-erythrose 4-phosphate and phosphoenolpyruvate: step 5/7. In terms of biological role, catalyzes the specific phosphorylation of the 3-hydroxyl group of shikimic acid using ATP as a cosubstrate. The protein is Shikimate kinase of Vibrio campbellii (strain ATCC BAA-1116).